The primary structure comprises 323 residues: Sphingomyelinase D (323 aa).

Positions 1-20 (MISLLRLCSFLAAGSILVQG) are cleaved as a signal peptide. Histidine 59 is an active-site residue. The Mg(2+) site is built by glutamate 79, aspartate 81, and aspartate 127. The SMD-tail signature appears at 308 to 315 (ATNDDNPW).

The protein belongs to the sphingomyelinase D/phospholipase D family. Mg(2+) is required as a cofactor.

The protein resides in the secreted. The catalysed reaction is a sphingomyelin + H2O = an N-acylsphing-4-enine 1-phosphate + choline + H(+). Catalyzes the hydrolysis of sphingomyelin. Sphingomyelinases D are produced by some spider in their venoms, but also by arthropods such as ticks, or pathogenic bacteria and fungi. They might play a role in pathogenicity through different mechanisms, such as membrane destabilization and host cell penetration, but also pulmonary inflammation and cutaneous lesions. The sequence is that of Sphingomyelinase D from Trichophyton rubrum (strain ATCC MYA-4607 / CBS 118892) (Athlete's foot fungus).